The sequence spans 398 residues: UPF0261 protein RA0729 (398 aa).

The protein belongs to the UPF0261 family.

The polypeptide is UPF0261 protein RA0729 (Rhizobium meliloti (strain 1021) (Ensifer meliloti)).